Consider the following 711-residue polypeptide: DNA topoisomerase 3 (711 aa).

Positions 2–135 constitute a Toprim domain; that stretch reads KSLILAEKPS…IKRLWISSVT (134 aa). E8 and D104 together coordinate Mg(2+). In terms of domain architecture, Topo IA-type catalytic spans 152-580; that stretch reads YQNLYEAALA…EMKNFTFKVV (429 aa). Residues 186–191 are interaction with DNA; it reads SLGRVQ. Y305 serves as the catalytic O-(5'-phospho-DNA)-tyrosine intermediate.

It belongs to the type IA topoisomerase family. It depends on Mg(2+) as a cofactor.

The catalysed reaction is ATP-independent breakage of single-stranded DNA, followed by passage and rejoining.. Its function is as follows. Releases the supercoiling and torsional tension of DNA, which is introduced during the DNA replication and transcription, by transiently cleaving and rejoining one strand of the DNA duplex. Introduces a single-strand break via transesterification at a target site in duplex DNA. The scissile phosphodiester is attacked by the catalytic tyrosine of the enzyme, resulting in the formation of a DNA-(5'-phosphotyrosyl)-enzyme intermediate and the expulsion of a 3'-OH DNA strand. The free DNA strand then undergoes passage around the unbroken strand, thus removing DNA supercoils. Finally, in the religation step, the DNA 3'-OH attacks the covalent intermediate to expel the active-site tyrosine and restore the DNA phosphodiester backbone. The sequence is that of DNA topoisomerase 3 from Staphylococcus epidermidis (strain ATCC 12228 / FDA PCI 1200).